The following is a 504-amino-acid chain: Anaerobic nitric oxide reductase transcription regulator NorR (504 aa).

Asp57 carries the post-translational modification 4-aspartylphosphate. The 230-residue stretch at 187–416 (MIGLSPGMTQ…LEHAIHRAVV (230 aa)) folds into the Sigma-54 factor interaction domain. ATP contacts are provided by residues 215–222 (GETGTGKE) and 278–287 (ADNGTLFLDE). A DNA-binding region (H-T-H motif) is located at residues 479 to 498 (WAACARMLETDVANLHRLAK).

It participates in nitrogen metabolism; nitric oxide reduction. In terms of biological role, required for the expression of anaerobic nitric oxide (NO) reductase, acts as a transcriptional activator for at least the norVW operon. Activation also requires sigma-54. The sequence is that of Anaerobic nitric oxide reductase transcription regulator NorR from Escherichia coli O81 (strain ED1a).